Consider the following 440-residue polypeptide: Diaminopimelate decarboxylase (440 aa).

Lysine 61 is modified (N6-(pyridoxal phosphate)lysine). Pyridoxal 5'-phosphate contacts are provided by residues glycine 234 and glutamate 275–arginine 278. Substrate contacts are provided by arginine 278, arginine 314, and tyrosine 318. The Proton donor role is filled by cysteine 348. Positions 349 and 384 each coordinate substrate. Tyrosine 384 serves as a coordination point for pyridoxal 5'-phosphate. Low complexity predominate over residues leucine 421 to leucine 431. The interval leucine 421–arginine 440 is disordered.

The protein belongs to the Orn/Lys/Arg decarboxylase class-II family. LysA subfamily. Homodimer. Pyridoxal 5'-phosphate serves as cofactor.

The enzyme catalyses meso-2,6-diaminopimelate + H(+) = L-lysine + CO2. It functions in the pathway amino-acid biosynthesis; L-lysine biosynthesis via DAP pathway; L-lysine from DL-2,6-diaminopimelate: step 1/1. In terms of biological role, specifically catalyzes the decarboxylation of meso-diaminopimelate (meso-DAP) to L-lysine. The protein is Diaminopimelate decarboxylase of Streptomyces coelicolor (strain ATCC BAA-471 / A3(2) / M145).